A 607-amino-acid polypeptide reads, in one-letter code: Phosphatidylinositol 4-kinase LSB6 (607 aa).

The span at 73–88 shows a compositional bias: polar residues; the sequence is NVPSESPRPDQTSGSN. Positions 73–93 are disordered; it reads NVPSESPRPDQTSGSNPAVGL. The 362-residue stretch at 161–522 folds into the PI3K/PI4K catalytic domain; the sequence is GRELERIQTG…LVRRTRCQVI (362 aa). Residues 167 to 173 are G-loop; it reads IQTGSSG. The disordered stretch occupies residues 318–356; the sequence is KSSGEDINHKPETTRNLTDETEPSKQINSSPISTESEEN. Residues 319–330 show a composition bias toward basic and acidic residues; it reads SSGEDINHKPET. Residues 341–351 show a composition bias toward polar residues; it reads SKQINSSPIST. A catalytic loop region spans residues 384 to 392; that stretch reads RNTDRGLDN. The activation loop stretch occupies residues 411–431; sequence AIDNGLSFPWKHPDEWRLYPY.

The protein belongs to the PI3/PI4-kinase family. As to quaternary structure, interacts with LAS17. The cofactor is Mg(2+). It depends on Mn(2+) as a cofactor.

It is found in the cell membrane. Its subcellular location is the vacuole membrane. The catalysed reaction is a 1,2-diacyl-sn-glycero-3-phospho-(1D-myo-inositol) + ATP = a 1,2-diacyl-sn-glycero-3-phospho-(1D-myo-inositol 4-phosphate) + ADP + H(+). Functionally, may play a role in endocytic and/or exocytic pathways. This chain is Phosphatidylinositol 4-kinase LSB6 (LSB6), found in Saccharomyces cerevisiae (strain ATCC 204508 / S288c) (Baker's yeast).